An 873-amino-acid chain; its full sequence is Protein sey1 (873 aa).

Over 1–762 (MVDQRPRAGS…KRSAIGGITQ (762 aa)) the chain is Cytoplasmic. Positions 68–320 (GFNYHLISVF…IPADGFAHYA (253 aa)) constitute a GB1/RHD3-type G domain. 78–85 (GSQSTGKS) is a GTP binding site. A coiled-coil region spans residues 462–519 (SYDFAEIVKQETKAALERYEKEARASLVEGTSWSNYKQELKLYQKDLAEVSGQLRRDE). Residues 691–716 (RWVGHTPSSATAADEEDLTPIGGVDE) are disordered. Residues 703–716 (ADEEDLTPIGGVDE) show a composition bias toward acidic residues. The chain crosses the membrane as a helical span at residues 763-783 (VPLYFYGLLLALGWNEIWAVL). The Lumenal portion of the chain corresponds to 784–786 (RNP). The chain crosses the membrane as a helical span at residues 787–807 (AYFFLLFVCAIGAYVTYQLNL). The Cytoplasmic segment spans residues 808-873 (WGPILKMADA…VEDEDENDDI (66 aa)). Residues 812–839 (LKMADAASRQALEELKKKLREFLEASDT) adopt a coiled-coil conformation. Positions 839-873 (TGRQAMAMSSGEEYEMSSLNRGGKRVEDEDENDDI) are disordered.

It belongs to the TRAFAC class dynamin-like GTPase superfamily. GB1/RHD3 GTPase family. RHD3 subfamily.

Its subcellular location is the endoplasmic reticulum membrane. Its function is as follows. Cooperates with the reticulon proteins and tubule-shaping DP1 family proteins to generate and maintain the structure of the tubular endoplasmic reticulum network. Has GTPase activity, which is required for its function in ER organization. The polypeptide is Protein sey1 (sey1) (Talaromyces marneffei (strain ATCC 18224 / CBS 334.59 / QM 7333) (Penicillium marneffei)).